Here is a 247-residue protein sequence, read N- to C-terminus: DNA polymerase sliding clamp (247 aa).

It belongs to the PCNA family. In terms of assembly, homotrimer. The subunits circularize to form a toroid; DNA passes through its center. Replication factor C (RFC) is required to load the toroid on the DNA.

Sliding clamp subunit that acts as a moving platform for DNA processing. Responsible for tethering the catalytic subunit of DNA polymerase and other proteins to DNA during high-speed replication. This is DNA polymerase sliding clamp from Methanoculleus marisnigri (strain ATCC 35101 / DSM 1498 / JR1).